The primary structure comprises 629 residues: Chaperone protein DnaK (629 aa).

The residue at position 195 (Thr195) is a Phosphothreonine; by autocatalysis. Disordered regions lie at residues 514 to 533 (EAEQ…EKRN) and 543 to 629 (LGQL…KPAE). A compositionally biased stretch (basic and acidic residues) spans 555-590 (DAKDRLKAAADEAEEAVRSDDDSRIERAQKQLEEAM). Residues 595 to 614 (TAAQSGSQNQAGQGAQTQTG) are compositionally biased toward low complexity. Residues 615 to 629 (RQEDDVIDADFKPAE) are compositionally biased toward basic and acidic residues.

Belongs to the heat shock protein 70 family.

In terms of biological role, acts as a chaperone. The polypeptide is Chaperone protein DnaK (Deinococcus geothermalis (strain DSM 11300 / CIP 105573 / AG-3a)).